Reading from the N-terminus, the 341-residue chain is Phosphate acyltransferase (341 aa).

Belongs to the PlsX family. In terms of assembly, homodimer. Probably interacts with PlsY.

It localises to the cytoplasm. The enzyme catalyses a fatty acyl-[ACP] + phosphate = an acyl phosphate + holo-[ACP]. It functions in the pathway lipid metabolism; phospholipid metabolism. In terms of biological role, catalyzes the reversible formation of acyl-phosphate (acyl-PO(4)) from acyl-[acyl-carrier-protein] (acyl-ACP). This enzyme utilizes acyl-ACP as fatty acyl donor, but not acyl-CoA. The chain is Phosphate acyltransferase from Vibrio atlanticus (strain LGP32) (Vibrio splendidus (strain Mel32)).